The sequence spans 315 residues: Bifunctional protein FolD (315 aa).

NADP(+) contacts are provided by residues 166–168 (GRS), Ser193, and Ile234.

This sequence belongs to the tetrahydrofolate dehydrogenase/cyclohydrolase family. As to quaternary structure, homodimer.

The catalysed reaction is (6R)-5,10-methylene-5,6,7,8-tetrahydrofolate + NADP(+) = (6R)-5,10-methenyltetrahydrofolate + NADPH. It catalyses the reaction (6R)-5,10-methenyltetrahydrofolate + H2O = (6R)-10-formyltetrahydrofolate + H(+). Its pathway is one-carbon metabolism; tetrahydrofolate interconversion. In terms of biological role, catalyzes the oxidation of 5,10-methylenetetrahydrofolate to 5,10-methenyltetrahydrofolate and then the hydrolysis of 5,10-methenyltetrahydrofolate to 10-formyltetrahydrofolate. This Treponema pallidum (strain Nichols) protein is Bifunctional protein FolD.